Consider the following 349-residue polypeptide: Protein disulfide isomerase Creld2 (349 aa).

A signal peptide spans 1-22; that stretch reads MHLLLAAGFGLLLLLLPPPAAS. A CXXC motif is present at residues 28–31; that stretch reads CQRC. Intrachain disulfides connect Cys-28–Cys-31, Cys-137–Cys-151, Cys-145–Cys-163, and Cys-165–Cys-174. The region spanning 133–175 is the EGF-like 1 domain; that stretch reads DCKECQGGSERPCSGNGYCSGDGSRQGDGSCQCHAGYKGPLCI. The N-linked (GlcNAc...) asparagine glycan is linked to Asn-187. An FU 1 repeat occupies 190 to 237; that stretch reads HSICLACDESCKTCSGPSNKDCVQCEVGWARVEDACVDVDECAAETPP. Asn-248 carries N-linked (GlcNAc...) asparagine glycosylation. The FU 2 repeat unit spans residues 250–297; it reads SYICEECDSTCVGCTGKGPANCKECIAGYTKQSGQCADIDECSLEEKA. Positions 260–263 match the CXXC motif; that stretch reads CVGC. Cystine bridges form between Cys-260/Cys-263, Cys-291/Cys-305, Cys-298/Cys-314, and Cys-316/Cys-327. An EGF-like 2; calcium-binding domain is found at 287–328; the sequence is DIDECSLEEKACKRRNENCYNVPGSFVCVCPDGFEETEDACV.

The protein belongs to the CRELD family. As to quaternary structure, interacts with Chrna4. Component of a complex containing at least Creld2, Manf, Matn3 and Pdia4. Broadly expressed in brain (at protein level).

It is found in the endoplasmic reticulum. The enzyme catalyses Catalyzes the rearrangement of -S-S- bonds in proteins.. Protein disulfide isomerase. Might play a role in the unfolded protein response. May regulate transport of alpha4-beta2 neuronal acetylcholine receptor. This Rattus norvegicus (Rat) protein is Protein disulfide isomerase Creld2 (Creld2).